Here is a 362-residue protein sequence, read N- to C-terminus: Caveolae-associated protein 4 (362 aa).

A disordered region spans residues 1–24 (MEHNGSASNAGKIHQNRLSSVTED). The stretch at 100–120 (IKDVKARVEKQQVRVTKVETK) forms a coiled coil. Phosphoserine is present on residues Ser152, Ser171, and Ser172. Basic and acidic residues-rich tracts occupy residues 230 to 255 (RERL…ERFK), 275 to 289 (KAKD…VDRG), and 305 to 320 (HEFH…KEVT). Disordered stretches follow at residues 230 to 289 (RERL…VDRG) and 305 to 346 (HEFH…KPQV). Residue Tyr324 is modified to Phosphotyrosine. Residue Thr334 is modified to Phosphothreonine. At Ser353 the chain carries Phosphoserine.

This sequence belongs to the CAVIN family. Component of the CAVIN complex composed of CAVIN1, CAVIN2, CAVIN3 and CAVIN4. Interacts with CAVIN1. Interacts with CAVIN2; this augments the transactivation of NPPA. Interacts with CAV3, ADRA1A, ADRA1B, MAPK1 and MAPK3. As to expression, abundantly expressed in cardiac and skeletal muscle (at protein level). Weaker expression in aorta and lung. In heart, expressed in cardiomyocytes and vascular smooth muscle cells but not in other surrounding cells including vascular endothelial cells.

It localises to the cytoplasm. It is found in the myofibril. The protein resides in the sarcomere. The protein localises to the cytosol. Its subcellular location is the membrane. It localises to the caveola. It is found in the cell membrane. The protein resides in the sarcolemma. Functionally, modulates the morphology of formed caveolae in cardiomyocytes, but is not required for caveolar formation. Facilitates the recruitment of MAPK1/3 to caveolae within cardiomyocytes and regulates alpha-1 adrenergic receptor-induced hypertrophic responses in cardiomyocytes through MAPK1/3 activation. Contributes to proper membrane localization and stabilization of caveolin-3 (CAV3) in cardiomyocytes. Induces RHOA activation and activates NPPA transcription and myofibrillar organization through the Rho/ROCK signaling pathway. The chain is Caveolae-associated protein 4 (Cavin4) from Mus musculus (Mouse).